Consider the following 221-residue polypeptide: Oligoribonuclease (221 aa).

Residues 21 to 186 (LVWVDLEMTG…ADIVESIREL (166 aa)) enclose the Exonuclease domain. The active site involves Tyr-143.

It belongs to the oligoribonuclease family.

The protein localises to the cytoplasm. In terms of biological role, 3'-to-5' exoribonuclease specific for small oligoribonucleotides. This chain is Oligoribonuclease, found in Corynebacterium efficiens (strain DSM 44549 / YS-314 / AJ 12310 / JCM 11189 / NBRC 100395).